The primary structure comprises 295 residues: Glycine--tRNA ligase alpha subunit (295 aa).

The protein belongs to the class-II aminoacyl-tRNA synthetase family. In terms of assembly, tetramer of two alpha and two beta subunits.

The protein resides in the cytoplasm. The catalysed reaction is tRNA(Gly) + glycine + ATP = glycyl-tRNA(Gly) + AMP + diphosphate. This Thermosynechococcus vestitus (strain NIES-2133 / IAM M-273 / BP-1) protein is Glycine--tRNA ligase alpha subunit.